The chain runs to 273 residues: Undecaprenyl-diphosphatase (273 aa).

The next 8 helical transmembrane spans lie at 13-35 (GLVE…VFGN), 45-62 (VFEI…VFEY), 82-102 (FVLN…LFGK), 108-128 (LFNP…ILWV), 144-164 (ALRP…LIPG), 186-206 (TEFS…YDVL), 219-239 (LILI…KALL), and 250-270 (FAYY…SGWI).

Belongs to the UppP family.

The protein localises to the cell inner membrane. It catalyses the reaction di-trans,octa-cis-undecaprenyl diphosphate + H2O = di-trans,octa-cis-undecaprenyl phosphate + phosphate + H(+). In terms of biological role, catalyzes the dephosphorylation of undecaprenyl diphosphate (UPP). Confers resistance to bacitracin. This Neisseria meningitidis serogroup C (strain 053442) protein is Undecaprenyl-diphosphatase.